A 150-amino-acid chain; its full sequence is Transcription antitermination protein NusB (150 aa).

It belongs to the NusB family.

Its function is as follows. Involved in transcription antitermination. Required for transcription of ribosomal RNA (rRNA) genes. Binds specifically to the boxA antiterminator sequence of the ribosomal RNA (rrn) operons. This chain is Transcription antitermination protein NusB, found in Alcanivorax borkumensis (strain ATCC 700651 / DSM 11573 / NCIMB 13689 / SK2).